The primary structure comprises 236 residues: 2,3,4,5-tetrahydropyridine-2,6-dicarboxylate N-acetyltransferase (236 aa).

It belongs to the transferase hexapeptide repeat family. DapH subfamily.

It catalyses the reaction (S)-2,3,4,5-tetrahydrodipicolinate + acetyl-CoA + H2O = L-2-acetamido-6-oxoheptanedioate + CoA. It functions in the pathway amino-acid biosynthesis; L-lysine biosynthesis via DAP pathway; LL-2,6-diaminopimelate from (S)-tetrahydrodipicolinate (acetylase route): step 1/3. Its function is as follows. Catalyzes the transfer of an acetyl group from acetyl-CoA to tetrahydrodipicolinate. This chain is 2,3,4,5-tetrahydropyridine-2,6-dicarboxylate N-acetyltransferase, found in Brevibacillus brevis (strain 47 / JCM 6285 / NBRC 100599).